Consider the following 87-residue polypeptide: Small ribosomal subunit protein bS16 (87 aa).

It belongs to the bacterial ribosomal protein bS16 family.

The sequence is that of Small ribosomal subunit protein bS16 from Psychrobacter sp. (strain PRwf-1).